The primary structure comprises 430 residues: Glutamate-1-semialdehyde 2,1-aminomutase (430 aa).

Residue K265 is modified to N6-(pyridoxal phosphate)lysine.

This sequence belongs to the class-III pyridoxal-phosphate-dependent aminotransferase family. HemL subfamily. As to quaternary structure, homodimer. Pyridoxal 5'-phosphate is required as a cofactor.

The protein resides in the cytoplasm. The catalysed reaction is (S)-4-amino-5-oxopentanoate = 5-aminolevulinate. It participates in porphyrin-containing compound metabolism; protoporphyrin-IX biosynthesis; 5-aminolevulinate from L-glutamyl-tRNA(Glu): step 2/2. This Helicobacter pylori (strain HPAG1) protein is Glutamate-1-semialdehyde 2,1-aminomutase.